The following is a 318-amino-acid chain: Small ribosomal subunit protein uS3 (318 aa).

One can recognise a KH type-2 domain in the interval 17 to 86 (MDEYFAEQLS…NPQIDAQEVK (70 aa)). Basic and acidic residues predominate over residues 198 to 229 (SVEVEEPAEKPAEKPAEKPAEKAAAPKKEAAK). The tract at residues 198-275 (SVEVEEPAEK…VQAETSEEIE (78 aa)) is disordered. Residues 234-250 (APAPEAPAPAPEAPAPA) are compositionally biased toward pro residues. Acidic residues predominate over residues 253–275 (EEAEVAEPEEAEEVQAETSEEIE).

This sequence belongs to the universal ribosomal protein uS3 family. As to quaternary structure, part of the 30S ribosomal subunit.

Functionally, binds the lower part of the 30S subunit head. The sequence is that of Small ribosomal subunit protein uS3 from Methanosarcina acetivorans (strain ATCC 35395 / DSM 2834 / JCM 12185 / C2A).